Consider the following 760-residue polypeptide: DNA replication licensing factor mcm7 (760 aa).

An MCM domain is found at 353-559 (VYEKLAKSIA…ETDEHLAQHV (207 aa)). ATP contacts are provided by Y366, G406, A408, K409, S410, N511, R536, and R630. The Arginine finger motif lies at 535-538 (SRFD).

Belongs to the MCM family. Component of the mcm2-7 complex. The complex forms a toroidal hexameric ring with the proposed subunit order mcm2-mcm6-mcm4-mcm7-mcm3-mcm5. The heterodimers of mcm4/mcm6 and mcm3/mcm5 interact with mcm2 and mcm7. Interacts with sld3 and mcm10.

Its subcellular location is the nucleus. It carries out the reaction ATP + H2O = ADP + phosphate + H(+). Its function is as follows. Acts as a component of the MCM2-7 complex (MCM complex) which is the replicative helicase essential for 'once per cell cycle' DNA replication initiation and elongation in eukaryotic cells. Core component of CDC45-MCM-GINS (CMG) helicase, the molecular machine that unwinds template DNA during replication, and around which the replisome is built. The active ATPase sites in the MCM2-7 ring are formed through the interaction surfaces of two neighboring subunits such that a critical structure of a conserved arginine finger motif is provided in trans relative to the ATP-binding site of the Walker A box of the adjacent subunit. The six ATPase active sites, however, are likely to contribute differentially to the complex helicase activity. Required for the progression of S phase. The polypeptide is DNA replication licensing factor mcm7 (mcm7) (Schizosaccharomyces pombe (strain 972 / ATCC 24843) (Fission yeast)).